The sequence spans 305 residues: GMP synthase [glutamine-hydrolyzing] subunit B (305 aa).

The 184-residue stretch at 2–185 folds into the GMPS ATP-PPase domain; it reads VNVDEFIEEA…LDLEEIISER (184 aa). 29-35 serves as a coordination point for ATP; that stretch reads SGGVDSS.

As to quaternary structure, heterodimer composed of a glutamine amidotransferase subunit (A) and a GMP-binding subunit (B).

The enzyme catalyses XMP + L-glutamine + ATP + H2O = GMP + L-glutamate + AMP + diphosphate + 2 H(+). Its pathway is purine metabolism; GMP biosynthesis; GMP from XMP (L-Gln route): step 1/1. In terms of biological role, catalyzes the synthesis of GMP from XMP. In Haloarcula marismortui (strain ATCC 43049 / DSM 3752 / JCM 8966 / VKM B-1809) (Halobacterium marismortui), this protein is GMP synthase [glutamine-hydrolyzing] subunit B.